Here is a 436-residue protein sequence, read N- to C-terminus: 3-ketoacyl-CoA thiolase (436 aa).

The active-site Acyl-thioester intermediate is the C99. Catalysis depends on proton acceptor residues H392 and C422.

The protein belongs to the thiolase-like superfamily. Thiolase family. Heterotetramer of two alpha chains (FadJ) and two beta chains (FadI).

It localises to the cytoplasm. It carries out the reaction an acyl-CoA + acetyl-CoA = a 3-oxoacyl-CoA + CoA. It functions in the pathway lipid metabolism; fatty acid beta-oxidation. In terms of biological role, catalyzes the final step of fatty acid oxidation in which acetyl-CoA is released and the CoA ester of a fatty acid two carbons shorter is formed. This is 3-ketoacyl-CoA thiolase from Yersinia pseudotuberculosis serotype O:1b (strain IP 31758).